A 461-amino-acid polypeptide reads, in one-letter code: ATP synthase subunit beta (461 aa).

ATP is bound at residue 151-158; sequence GGAGVGKT.

It belongs to the ATPase alpha/beta chains family. In terms of assembly, F-type ATPases have 2 components, CF(1) - the catalytic core - and CF(0) - the membrane proton channel. CF(1) has five subunits: alpha(3), beta(3), gamma(1), delta(1), epsilon(1). CF(0) has three main subunits: a(1), b(2) and c(9-12). The alpha and beta chains form an alternating ring which encloses part of the gamma chain. CF(1) is attached to CF(0) by a central stalk formed by the gamma and epsilon chains, while a peripheral stalk is formed by the delta and b chains.

Its subcellular location is the cell inner membrane. The catalysed reaction is ATP + H2O + 4 H(+)(in) = ADP + phosphate + 5 H(+)(out). Produces ATP from ADP in the presence of a proton gradient across the membrane. The catalytic sites are hosted primarily by the beta subunits. This is ATP synthase subunit beta from Pseudoalteromonas translucida (strain TAC 125).